A 154-amino-acid chain; its full sequence is uncharacterized protein (154 aa).

Helical transmembrane passes span 15-37, 58-80, 95-116, and 123-145; these read DFSF…ALIT, FAAM…WLWG, LGAL…FAFT, and LVIS…FVPH.

It is found in the cell membrane. This is an uncharacterized protein from Archaeoglobus fulgidus (strain ATCC 49558 / DSM 4304 / JCM 9628 / NBRC 100126 / VC-16).